A 991-amino-acid chain; its full sequence is Adhesion G-protein coupled receptor F3 (991 aa).

A signal peptide spans 1–20; it reads MSSLALSQLLLAVTLPLLEL. Residues 21–694 are Extracellular-facing; the sequence is EPTFVPTAQS…ENPTLDLLSQ (674 aa). Residues N75, N102, N118, N321, N362, N484, N571, N589, N630, and N660 are each glycosylated (N-linked (GlcNAc...) asparagine). A GAIN-B domain is found at 519-684; sequence HPFSFSSANV…SILMSQHTVP (166 aa). 2 disulfide bridges follow: C635–C666 and C654–C668. The GPS stretch occupies residues 635-684; it reads CVFWDHRVFQGQGGWSDEGCEVHAANASITQCICQHLTAFSILMSQHTVP. The helical transmembrane segment at 695–715 threads the bilayer; sequence VGTGASVLALLVCLAIYGLVW. The Cytoplasmic portion of the chain corresponds to 716–730; sequence RVVVRNKVAFFRHTT. Residues 731–751 form a helical membrane-spanning segment; sequence LFNMVICLLVADTCFLGSPFL. Residues 752 to 757 lie on the Extracellular side of the membrane; it reads PSGYHS. The helical transmembrane segment at 758-778 threads the bilayer; the sequence is LICLVTAFLCHFFYLATFFWM. Over 779–799 the chain is Cytoplasmic; it reads LAQALVLAHQLLFVFHQLSKH. Residues 800–820 form a helical membrane-spanning segment; it reads VVLSLMVMLGYLCPLGFAGVT. The Extracellular portion of the chain corresponds to 821–850; the sequence is LGLYLPQRKYLWEGKCFLNGGGVMLYSFSE. Residues 851–871 traverse the membrane as a helical segment; sequence PVLAIVGVNGLVLVIAVLKLL. Topologically, residues 872–892 are cytoplasmic; it reads RPSLSEGPTVEKRQALVGVLK. The helical transmembrane segment at 893-913 threads the bilayer; that stretch reads ALLILTPIFGLTWGLGVATLF. Topologically, residues 914-916 are extracellular; sequence DGS. A helical transmembrane segment spans residues 917–937; that stretch reads IVSHYAFSILNSLQGVFILVF. At 938–991 the chain is on the cytoplasmic side; that stretch reads GCLTDKKVLEALRKRLRGSRSSNSAISMVTNETYTSEHSKERSEPASYEERMTD. The segment at 964-991 is disordered; the sequence is SMVTNETYTSEHSKERSEPASYEERMTD. The segment covering 972–991 has biased composition (basic and acidic residues); it reads TSEHSKERSEPASYEERMTD.

The protein belongs to the G-protein coupled receptor 2 family. Adhesion G-protein coupled receptor (ADGR) subfamily. As to quaternary structure, heterodimer of 2 chains generated by proteolytic processing; the large extracellular N-terminal fragment and the membrane-bound C-terminal fragment predominantly remain associated and non-covalently linked. In terms of processing, autoproteolytically processed at the GPS region of the GAIN-B domain; this cleavage modulates receptor activity. As to expression, expression is restricted to testis and circumvallate papillae.

It is found in the membrane. In terms of biological role, orphan receptor. The chain is Adhesion G-protein coupled receptor F3 (ADGRF3) from Mus musculus (Mouse).